A 372-amino-acid polypeptide reads, in one-letter code: Methylthioribose-1-phosphate isomerase 1 (372 aa).

D254 functions as the Proton donor in the catalytic mechanism.

The protein belongs to the eIF-2B alpha/beta/delta subunits family. MtnA subfamily.

The protein resides in the cytoplasm. It localises to the nucleus. It catalyses the reaction 5-(methylsulfanyl)-alpha-D-ribose 1-phosphate = 5-(methylsulfanyl)-D-ribulose 1-phosphate. It participates in amino-acid biosynthesis; L-methionine biosynthesis via salvage pathway; L-methionine from S-methyl-5-thio-alpha-D-ribose 1-phosphate: step 1/6. Catalyzes the interconversion of methylthioribose-1-phosphate (MTR-1-P) into methylthioribulose-1-phosphate (MTRu-1-P). The polypeptide is Methylthioribose-1-phosphate isomerase 1 (Trypanosoma cruzi (strain CL Brener)).